Consider the following 401-residue polypeptide: Phosphoglycerate kinase (401 aa).

Substrate is bound by residues 20 to 22 (DFN), Arg-35, 58 to 61 (HLGR), Arg-117, and Arg-154. Residues Lys-204, Gly-298, Glu-329, and 358-361 (GGDS) each bind ATP.

It belongs to the phosphoglycerate kinase family. As to quaternary structure, monomer.

It localises to the cytoplasm. It catalyses the reaction (2R)-3-phosphoglycerate + ATP = (2R)-3-phospho-glyceroyl phosphate + ADP. The protein operates within carbohydrate degradation; glycolysis; pyruvate from D-glyceraldehyde 3-phosphate: step 2/5. The polypeptide is Phosphoglycerate kinase (Bifidobacterium longum subsp. infantis (strain ATCC 15697 / DSM 20088 / JCM 1222 / NCTC 11817 / S12)).